The sequence spans 592 residues: MRTHYCGHVSETDLDQEVTLCGWAHRRRDHGGVIFIDLRDREGLVQVVFDPDRPETFALAERVRSEFVLKVRGRVRRRPAGTENPDLPTGQVEVLGLELDLLNPAKTPPFQLDEHEQAGEDVRLRYRYVDLRRPEMLQRLRARARITSNLRRFLDEHGFLDIETPMLTRATPEGARDYLVPSRTHPGSFFALPQSPQLFKQLLMMAGMDRYYQIVRCFRDEDLRADRQPEFTQLDIETSFMDEEGIMHLTERMMRRLFADVLQVDLPDPFPRMGYAEAMARFGSDKPDLRIPLELVEVADLMGGVEFKVFAGPAADPRGRVAALHVPGGAGLTRKQIDDYTQFVGRYGAKGLAYIKVNDPAQGREGLQSPILKFLTDEAVDGILRRTEARAGDLIFFGADKAKVVNDALGALRVKLGHDLAMVEDEWRPLWVVDFPMFEYDEKDGRLYALHHPFTAPNVDDPAELADKDPEQLVSRAYDMVLNGTELGGGSVRIHRQDMQQAVFRLLGIDEDEARAKFGFLLDALEYGAPPHGGIAFGLDRLVMLMTGASSIREVMAFPKTQTAACLLTDAPAEVDIAQLQELALRITKPQA.

Residue Glu-173 coordinates L-aspartate. Positions 197 to 200 (QLFK) are aspartate. Position 219 (Arg-219) interacts with L-aspartate. ATP-binding positions include 219–221 (RDE) and Gln-228. His-451 contacts L-aspartate. Residue Glu-486 coordinates ATP. Arg-493 provides a ligand contact to L-aspartate. 538–541 (GLDR) is a binding site for ATP.

This sequence belongs to the class-II aminoacyl-tRNA synthetase family. Type 1 subfamily. As to quaternary structure, homodimer.

Its subcellular location is the cytoplasm. The catalysed reaction is tRNA(Asx) + L-aspartate + ATP = L-aspartyl-tRNA(Asx) + AMP + diphosphate. Aspartyl-tRNA synthetase with relaxed tRNA specificity since it is able to aspartylate not only its cognate tRNA(Asp) but also tRNA(Asn). Reaction proceeds in two steps: L-aspartate is first activated by ATP to form Asp-AMP and then transferred to the acceptor end of tRNA(Asp/Asn). The chain is Aspartate--tRNA(Asp/Asn) ligase from Alkalilimnicola ehrlichii (strain ATCC BAA-1101 / DSM 17681 / MLHE-1).